The chain runs to 1136 residues: Myosin-binding protein C, fast-type (1136 aa).

Disordered stretches follow at residues 1-55 (MPEA…KKPD) and 151-177 (APRQ…DAGE). The segment covering 13–35 (KGKDAPKEAPAKQTPEEPPKEAP) has biased composition (basic and acidic residues). Residues 46-149 (PTGIFLKKPD…CDSCSFNVDV (104 aa)) form the Ig-like C2-type 1 domain. The span at 163 to 174 (SFKRSGDGKSED) shows a compositional bias: basic and acidic residues. Ig-like C2-type domains lie at 250 to 339 (SAAF…VKEP), 340 to 432 (PVLI…VEEK), 433 to 533 (QLEV…KQEP), and 534 to 633 (PKIH…VVDV). Fibronectin type-III domains are found at residues 636–732 (PPEA…IAPT) and 734–829 (APQH…IREI). One can recognise an Ig-like C2-type 6 domain in the interval 833–927 (PKIRLPRHLR…ATIRIRVVEK (95 aa)). In terms of domain architecture, Fibronectin type-III 3 spans 930 to 1025 (PAENVMVKEV…SKNTARILKT (96 aa)). The region spanning 1043 to 1136 (PKFLTPLMDR…ECKLDVRVPQ (94 aa)) is the Ig-like C2-type 7 domain.

It belongs to the immunoglobulin superfamily. MyBP family.

Thick filament-associated protein located in the crossbridge region of vertebrate striated muscle a bands. In vitro it binds MHC, F-actin and native thin filaments, and modifies the activity of actin-activated myosin ATPase. It may modulate muscle contraction or may play a more structural role. The polypeptide is Myosin-binding protein C, fast-type (Mybpc2) (Mus musculus (Mouse)).